Consider the following 313-residue polypeptide: MVQEIAQEIIRSARKKGTQDIYFVPKLDAYELHMRVGDERCKIGSYDFEKFAAVISHFKFVAGMNVGEKRRSQLGSCDYAYDHKIASLRLSTVGDYRGHESLVIRLLHDEEQDLHFWFQDIEELGKQYRQRGLYLFAGPVGSGKTTLMHELSKSLFKGQQVMSIEDPVEIKQDDMLQLQLNEAIGLTYENLIKLSLRHRPDLLIIGEIRDSETARAVVRASLTGATVFSTIHAKSIRGVYERLLELGVSEEELAVVLQGVCYQRLIGGGGIVDFASRDYQEHQAAKWNEQIDQLLKDGHITSLQAETEKISYS.

Gly138–Thr145 serves as a coordination point for ATP.

It belongs to the GSP E family.

It is found in the cell membrane. In terms of biological role, required for uptake of DNA by competent cells. May be involved in assembly of a complex forming a transformation pilus at the surface of competent cells. The chain is Competence protein ComGA from Streptococcus pneumoniae (strain ATCC BAA-255 / R6).